The primary structure comprises 273 residues: Torsin-1A (273 aa).

The interval 45 to 205 (KPKKPLTLSL…VSVFNNKNSG (161 aa)) is interaction with SNAPIN. Position 56–63 (56–63 (GWTGTGKN)) interacts with ATP. N-linked (GlcNAc...) asparagine glycosylation is found at Asn-97 and Asn-112.

This sequence belongs to the ClpA/ClpB family. Torsin subfamily. In terms of assembly, homohexamer. Interacts with TOR1B; the interaction may be specific of neural tissues. Interacts (ATP-bound) with TOR1AIP1 and TOR1AIP2; the interactions induce ATPase activity. Interacts with KLHL14; preferentially when ATP-free. Interacts with KLC1 (via TPR repeats); the interaction associates TOR1A with the kinesin oligomeric complex. Interacts with COPS4; the interaction associates TOR1A with the CSN complex. Interacts with SNAPIN; the interaction is direct and associates SNAPIN with the CSN complex. Interacts with STON2. Interacts (ATP-bound) with SYNE3 (via KASH domain); the interaction is required for SYNE3 nuclear envelope localization. Interacts with VIM; the interaction associates TOR1A with the cytoskeleton. Interacts with PLEC. Interacts (ATP-bound) with SLC6A3; regulates SLC6A3 transport to the plasma membrane. N-glycosylated.

The protein localises to the endoplasmic reticulum lumen. It is found in the nucleus membrane. The protein resides in the cell projection. Its subcellular location is the growth cone. It localises to the cytoplasmic vesicle membrane. The protein localises to the synapse. It is found in the synaptosome. The protein resides in the cytoplasm. Its subcellular location is the cytoskeleton. The catalysed reaction is ATP + H2O = ADP + phosphate + H(+). In terms of biological role, protein with chaperone functions important for the control of protein folding, processing, stability and localization as well as for the reduction of misfolded protein aggregates. Involved in the regulation of synaptic vesicle recycling, controls STON2 protein stability in collaboration with the COP9 signalosome complex (CSN). In the nucleus, may link the cytoskeleton with the nuclear envelope, this mechanism seems to be crucial for the control of nuclear polarity, cell movement and, specifically in neurons, nuclear envelope integrity. Participates in the cellular trafficking and may regulate the subcellular location of multipass membrane proteins such as the dopamine transporter SLC6A3, leading to the modulation of dopamine neurotransmission. In the endoplasmic reticulum, plays a role in the quality control of protein folding by increasing clearance of misfolded proteins such as SGCE variants or holding them in an intermediate state for proper refolding. May have a redundant function with TOR1B in non-neural tissues. The chain is Torsin-1A (TOR1A) from Cricetus cricetus (Black-bellied hamster).